Here is a 412-residue protein sequence, read N- to C-terminus: MAFHCQRDCYATELLTEVVSCHPAQLKLENGGKKNTVSGFNVLLKDTVLFPEGGGQPDDRGFIGEVPVLRVIRQGPDAVHFVASPLDPATEVLVKIDWNRRFDHMQQHSGQHLVTAIADSLYGFKTTSWDLGRQRSVIELDTPLVTTEQLEAIEKIANQKIREHVPVHVRLITVDDPEFDMVRSRGLPDDHAGPVRIIDIEGVDANMCCGTHVRNLSDLQMIKILGTEKGKKNKTNLIFLSGERVLKYVSRSYNTEKTLTSLLKNGPEEHIEAVDKLQKSVKALQKNNLTLLRDLAVLTAENFKSKADRGKFFSLHRKEGDNEFMNIIANVIGTEDTLLFLTIGDEKTSGLFLLAGPPGIVEKFGPRVCEILDGKGAGKCGRFQGKANKMSQRAEVEVLLQKVISSVEITQE.

Zn(2+)-binding residues include H108, H112, C208, and H212.

Belongs to the class-II aminoacyl-tRNA synthetase family. Alax-L subfamily. Requires Zn(2+) as cofactor.

It is found in the cytoplasm. In terms of biological role, functions in trans to edit the amino acid moiety from incorrectly charged tRNA(Ala). The chain is Alanyl-tRNA editing protein Aarsd1-A (aarsd1-a) from Xenopus laevis (African clawed frog).